The following is a 387-amino-acid chain: Palmitoyltransferase ZDHHC16A (387 aa).

The next 2 membrane-spanning stretches (helical) occupy residues 73–93 and 106–126; these read WFGM…VFIA and SPGW…MIVF. Positions 150–200 constitute a DHHC domain; the sequence is SVCKKCIIPKPARSHHCGICKTCILKMDHHCPWLNNCVGHFNHRYFFSFCL. C180 functions as the S-palmitoyl cysteine intermediate in the catalytic mechanism. 3 helical membrane passes run 198–218, 236–256, and 281–301; these read FCLF…HLFI, GVPV…GVAG, and VIYM…LTLW.

Belongs to the DHHC palmitoyltransferase family. In terms of tissue distribution, expressed in the central nervous system (CNS). Expressed in the developing forebrain, and especially in the telencephalon.

The protein localises to the endoplasmic reticulum membrane. It catalyses the reaction L-cysteinyl-[protein] + hexadecanoyl-CoA = S-hexadecanoyl-L-cysteinyl-[protein] + CoA. Palmitoyl acyltransferase that mediates palmitoylation of proteins and is required during embryonic heart development. Involved in the proliferation of neural stem cells by regulating the FGF/ERK pathway. Involved in the proliferation of neural stem cells by regulating the FGF/ERK pathway. This chain is Palmitoyltransferase ZDHHC16A, found in Danio rerio (Zebrafish).